The chain runs to 716 residues: Myogenesis-regulating glycosidase (716 aa).

The segment covering 1–11 (MSQNLQETSQA) has biased composition (polar residues). Positions 1–26 (MSQNLQETSQAYPRHRPGSHAGPKSL) are disordered. Topologically, residues 1–55 (MSQNLQETSQAYPRHRPGSHAGPKSLKVTPRATMYTFLPDNFSPAKPKPTKELRP) are cytoplasmic. Residues 56-76 (LLCSAVLGLLLVLAAVVAWCY) traverse the membrane as a helical; Signal-anchor for type II membrane protein segment. The Extracellular segment spans residues 77–716 (YSASLRKAER…DEVAYFTWAS (640 aa)). Asparagine 239, asparagine 249, and asparagine 455 each carry an N-linked (GlcNAc...) asparagine glycan. Catalysis depends on residues aspartate 462 and glutamate 465. The active-site Proton donor is the aspartate 527.

This sequence belongs to the glycosyl hydrolase 31 family. In terms of assembly, interacts with IGF2; this interaction is required for IGF2 secretion. Expressed in brain, liver, spleen, skeletal muscle, heart, lung and kidney. High expression is observed in the cerebellum, specifically in astrocytes. Highly expressed in skeletal muscle (at protein level).

It localises to the nucleus membrane. Its subcellular location is the endoplasmic reticulum membrane. Functionally, putative glycosidase. Promotes myogenesis by activating AKT signaling through the maturation and secretion of IGF2. The protein is Myogenesis-regulating glycosidase (Myorg) of Mus musculus (Mouse).